The sequence spans 115 residues: Splicing factor 3B subunit 6-like protein (115 aa).

The interaction with pre-mRNA branch site stretch occupies residues 9 to 22 (EVNSILFIKNLSFK). The RRM domain maps to 12-87 (SILFIKNLSF…RYLVVHYYNP (76 aa)).

Its subcellular location is the nucleus. Necessary for the splicing of pre-mRNA. The sequence is that of Splicing factor 3B subunit 6-like protein from Schizosaccharomyces pombe (strain 972 / ATCC 24843) (Fission yeast).